A 225-amino-acid chain; its full sequence is Transmembrane emp24 domain-containing protein p24delta11 (225 aa).

The N-terminal stretch at 1–35 (MDLLPSRYKIHKTKLRWILTMMTMMMMMVMRRGES) is a signal peptide. Residues 36 to 193 (MRLDMESGNT…ELNRSTNSRM (158 aa)) lie on the Lumenal side of the membrane. The GOLD domain occupies 45–160 (TKCISDDIKT…ITMLEVEVRK (116 aa)). A coiled-coil region spans residues 175-188 (LIEREREMQELNRS). Omega-N-methylated arginine is present on Arg178. The N-linked (GlcNAc...) asparagine glycan is linked to Asn186. Residues 194 to 210 (AALSLLSFVVTMSVAGL) traverse the membrane as a helical segment. Residues 211 to 225 (QLRHLKSFLERKKLL) are Cytoplasmic-facing. The short motif at 218–219 (FL) is the COPII vesicle coat-binding element. The COPI vesicle coat-binding motif lies at 218-225 (FLERKKLL).

The protein belongs to the EMP24/GP25L family. In terms of assembly, probably oligomerizes with other members of the EMP24/GP25L family. Associates with the COPI vesicle coat (coatomer). Associates with the COPII vesicle coat (coatomer).

It localises to the endoplasmic reticulum membrane. It is found in the golgi apparatus. Its subcellular location is the cis-Golgi network membrane. The protein resides in the golgi stack membrane. Its function is as follows. Involved in vesicular protein trafficking. Mainly functions in the early secretory pathway. Thought to act as cargo receptor at the lumenal side for incorporation of secretory cargo molecules into transport vesicles and to be involved in vesicle coat formation at the cytoplasmic side. This chain is Transmembrane emp24 domain-containing protein p24delta11, found in Arabidopsis thaliana (Mouse-ear cress).